Here is a 130-residue protein sequence, read N- to C-terminus: Large ribosomal subunit protein bL12 (130 aa).

Belongs to the bacterial ribosomal protein bL12 family. In terms of assembly, homodimer. Part of the ribosomal stalk of the 50S ribosomal subunit. Forms a multimeric L10(L12)X complex, where L10 forms an elongated spine to which 2 to 4 L12 dimers bind in a sequential fashion. Binds GTP-bound translation factors.

Functionally, forms part of the ribosomal stalk which helps the ribosome interact with GTP-bound translation factors. Is thus essential for accurate translation. The sequence is that of Large ribosomal subunit protein bL12 from Synechococcus sp. (strain RCC307).